A 32-amino-acid polypeptide reads, in one-letter code: DDCIKPYGFCSLPILKNGLCCSGACVGVCADL.

3 disulfide bridges follow: cysteine 3–cysteine 21, cysteine 10–cysteine 25, and cysteine 20–cysteine 29. At proline 6 the chain carries 4-hydroxyproline. Leucine 32 is modified (leucine amide).

The protein belongs to the conotoxin O1 superfamily. Expressed by the venom duct.

It localises to the secreted. Its function is as follows. Delta-conotoxins bind to site 6 of voltage-gated sodium channels and inhibit the inactivation process. This toxin inhibits sodium channel inactivation in neuronal membranes from amphibians and mammals (Nav1.2a/SCN1A, Nav1.3/SCN3A and Nav1.6/SCN8A) upon binding to receptor site 6. This is Delta-conotoxin EVIA from Conus ermineus (Agate cone).